The sequence spans 286 residues: MSSLRRLLLLLLLVFPATLLLRVGPGGSLAVAQDLTEDEETVEDSIIEDEDDEAEVEEDEPTDLAEDKEEDDVSGEPEASPSADTTILFVKGEDFPANNIVKFLVGFTNKGTEDFIVESLDASFRYPQDYQFYIQNFTALPLNTVVPPQRQATFEYSFIPAEPMGGRPFGLVINLNYKDLNGNVFQDAVFNQTVTIIEREDGLDGETIFMYMFLAGLGLLVVVGLHQLLESRKRKRPIQKVEMGTSSQNDVDMSWIPQETLNQINKASPRRLPRKRAQKRSVGSDE.

A signal peptide spans 1–20 (MSSLRRLLLLLLLVFPATLL). Residues 21-207 (LRVGPGGSLA…EREDGLDGET (187 aa)) are Lumenal-facing. Acidic residues predominate over residues 37–75 (EDEETVEDSIIEDEDDEAEVEEDEPTDLAEDKEEDDVSG). The tract at residues 37-83 (EDEETVEDSIIEDEDDEAEVEEDEPTDLAEDKEEDDVSGEPEASPSA) is disordered. N-linked (GlcNAc...) asparagine glycosylation is found at Asn136 and Asn191. The chain crosses the membrane as a helical span at residues 208–228 (IFMYMFLAGLGLLVVVGLHQL). At 229–286 (LESRKRKRPIQKVEMGTSSQNDVDMSWIPQETLNQINKASPRRLPRKRAQKRSVGSDE) the chain is on the cytoplasmic side. Ser247 bears the Phosphoserine mark. Thr260 carries the phosphothreonine modification. Residues 261-286 (LNQINKASPRRLPRKRAQKRSVGSDE) form a disordered region. Ser268 carries the post-translational modification Phosphoserine. Over residues 268–279 (SPRRLPRKRAQK) the composition is skewed to basic residues.

Belongs to the TRAP-alpha family. In terms of assembly, heterotetramer of TRAP-alpha, TRAP-beta, TRAP-delta and TRAP-gamma. Interacts with palmitoylated calnexin (CALX), the interaction is required for efficient folding of glycosylated proteins. Phosphorylated in its cytoplasmic tail.

The protein resides in the endoplasmic reticulum membrane. TRAP proteins are part of a complex whose function is to bind calcium to the ER membrane and thereby regulate the retention of ER resident proteins. May be involved in the recycling of the translocation apparatus after completion of the translocation process or may function as a membrane-bound chaperone facilitating folding of translocated proteins. The sequence is that of Translocon-associated protein subunit alpha (SSR1) from Bos taurus (Bovine).